Reading from the N-terminus, the 114-residue chain is Small ribosomal subunit protein uS15 (114 aa).

The protein belongs to the universal ribosomal protein uS15 family.

This chain is Small ribosomal subunit protein uS15 (RpS13), found in Musca domestica (House fly).